Consider the following 155-residue polypeptide: Ribosome maturation factor RimP (155 aa).

Belongs to the RimP family.

The protein localises to the cytoplasm. Its function is as follows. Required for maturation of 30S ribosomal subunits. The protein is Ribosome maturation factor RimP of Listeria innocua serovar 6a (strain ATCC BAA-680 / CLIP 11262).